We begin with the raw amino-acid sequence, 361 residues long: Chorismate synthase (361 aa).

The NADP(+) site is built by arginine 48 and arginine 54. Residues 125 to 127 (RSS), 238 to 239 (NA), glycine 278, 293 to 297 (KPTSS), and arginine 319 each bind FMN.

This sequence belongs to the chorismate synthase family. Homotetramer. The cofactor is FMNH2.

The catalysed reaction is 5-O-(1-carboxyvinyl)-3-phosphoshikimate = chorismate + phosphate. Its pathway is metabolic intermediate biosynthesis; chorismate biosynthesis; chorismate from D-erythrose 4-phosphate and phosphoenolpyruvate: step 7/7. Functionally, catalyzes the anti-1,4-elimination of the C-3 phosphate and the C-6 proR hydrogen from 5-enolpyruvylshikimate-3-phosphate (EPSP) to yield chorismate, which is the branch point compound that serves as the starting substrate for the three terminal pathways of aromatic amino acid biosynthesis. This reaction introduces a second double bond into the aromatic ring system. The chain is Chorismate synthase from Klebsiella pneumoniae subsp. pneumoniae (strain ATCC 700721 / MGH 78578).